The chain runs to 96 residues: Evasin P1074 (96 aa).

The signal sequence occupies residues 1–28; that stretch reads MAFNMITFLQMAVFVVILFNINLHSASA. Cystine bridges form between Cys48–Cys67, Cys52–Cys69, and Cys63–Cys80. An N-linked (GlcNAc...) asparagine glycan is attached at Asn74.

The protein resides in the secreted. Functionally, salivary chemokine-binding protein which binds to host chemokines CXCL1 and CXCL8. This is Evasin P1074 from Ixodes ricinus (Common tick).